The sequence spans 328 residues: Malate dehydrogenase (328 aa).

Residue 11–17 coordinates NAD(+); the sequence is GAAGQIG. Substrate-binding residues include Arg-94 and Arg-100. NAD(+) contacts are provided by residues Asn-107, Gln-114, and 131–133; that span reads VGN. Substrate contacts are provided by Asn-133 and Arg-164. His-189 functions as the Proton acceptor in the catalytic mechanism.

Belongs to the LDH/MDH superfamily. MDH type 2 family.

It carries out the reaction (S)-malate + NAD(+) = oxaloacetate + NADH + H(+). In terms of biological role, catalyzes the reversible oxidation of malate to oxaloacetate. In Xylella fastidiosa (strain M23), this protein is Malate dehydrogenase.